We begin with the raw amino-acid sequence, 346 residues long: Uroporphyrinogen decarboxylase (346 aa).

Substrate is bound by residues 23-27 (RQAGR), Asp-73, Tyr-151, Ser-206, and His-321.

Belongs to the uroporphyrinogen decarboxylase family. As to quaternary structure, homodimer.

The protein resides in the cytoplasm. It carries out the reaction uroporphyrinogen III + 4 H(+) = coproporphyrinogen III + 4 CO2. It participates in porphyrin-containing compound metabolism; protoporphyrin-IX biosynthesis; coproporphyrinogen-III from 5-aminolevulinate: step 4/4. Functionally, catalyzes the decarboxylation of four acetate groups of uroporphyrinogen-III to yield coproporphyrinogen-III. The sequence is that of Uroporphyrinogen decarboxylase from Aliarcobacter butzleri (strain RM4018) (Arcobacter butzleri).